The chain runs to 488 residues: Ergochrome gene cluster transcriptional regulator CPUR_05433 (488 aa).

Residues 1–29 form a disordered region; the sequence is MDHSIGGRNCQSGGTTASAPRSTGSDEFP. The segment covering 9 to 25 has biased composition (polar residues); sequence NCQSGGTTASAPRSTGS. Positions 36 to 63 form a DNA-binding region, zn(2)-C6 fungal-type; that stretch reads CHACSLSKVRCSKEKPSCSRCAKRGVPC.

It is found in the nucleus. Transcription factor; part of the gene cluster responsible for the typical purple-black color of the ergot sclerotia. The ergochrome gene cluster produces several ergot pigments including the yellow ergochrome secalonic acid and its derivatives, as well as the red anthraquinones endocrocin and clavorubin. The protein is Ergochrome gene cluster transcriptional regulator CPUR_05433 of Claviceps purpurea (strain 20.1) (Ergot fungus).